The chain runs to 791 residues: Lon protease (791 aa).

Residues 28-223 (LPVVVISEIM…YILQDIQSLL (196 aa)) form the Lon N-terminal domain. Position 374-381 (374-381 (GPPGVGKT)) interacts with ATP. In terms of domain architecture, Lon proteolytic spans 610 to 791 (KEKIGSTNGL…SDVFSQVFVV (182 aa)). Active-site residues include Ser-697 and Lys-740.

It belongs to the peptidase S16 family. As to quaternary structure, homohexamer. Organized in a ring with a central cavity.

Its subcellular location is the cytoplasm. The enzyme catalyses Hydrolysis of proteins in presence of ATP.. Its function is as follows. ATP-dependent serine protease that mediates the selective degradation of mutant and abnormal proteins as well as certain short-lived regulatory proteins. Required for cellular homeostasis and for survival from DNA damage and developmental changes induced by stress. Degrades polypeptides processively to yield small peptide fragments that are 5 to 10 amino acids long. Binds to DNA in a double-stranded, site-specific manner. The chain is Lon protease from Aster yellows witches'-broom phytoplasma (strain AYWB).